The chain runs to 396 residues: B2 bradykinin receptor (396 aa).

Residues 1 to 65 are Extracellular-facing; that stretch reads MDTRSSLCPK…EWWSWLNAIQ (65 aa). 2 N-linked (GlcNAc...) asparagine glycosylation sites follow: N33 and N44. Residues 66 to 89 traverse the membrane as a helical segment; it reads APFLWVLFLLAALENIFVLSVFCL. Residues 90–98 are Cytoplasmic-facing; it reads HKTNCTVAE. Residues 99–123 traverse the membrane as a helical segment; that stretch reads IYLGNLAAADLILACGLPFWAITIA. The Extracellular segment spans residues 124-136; that stretch reads NNFDWLFGEVLCR. Residues C135 and C216 are joined by a disulfide bond. A helical membrane pass occupies residues 137 to 158; it reads VVNTMIYMNLYSSICFLMLVSI. Over 159–180 the chain is Cytoplasmic; that stretch reads DRYLALVKTMSMGRMRGVRWAK. At Y161 the chain carries Phosphotyrosine. Residues 181-203 form a helical membrane-spanning segment; sequence LYSLVIWSCTLLLSSPMLVFRTM. The Extracellular segment spans residues 204–226; the sequence is KDYREEGHNVTACVIVYPSRSWE. Residue N212 is glycosylated (N-linked (GlcNAc...) asparagine). A helical transmembrane segment spans residues 227-253; that stretch reads VFTNMLLNLVGFLLPLSIITFCTVRIM. The Cytoplasmic portion of the chain corresponds to 254–272; that stretch reads QVLRNNEMKKFKEVQTEKK. A helical transmembrane segment spans residues 273-297; sequence ATVLVLAVLGLFVLCWFPFQISTFL. Topologically, residues 298–316 are extracellular; that stretch reads DTLLRLGVLSGCWNERAVD. A helical transmembrane segment spans residues 317–340; it reads IVTQISSYVAYSNSCLNPLVYVIV. At 341 to 396 the chain is on the cytoplasmic side; that stretch reads GKRFRKKSREVYQAICRKGGCMGESVQMENSMGTLRTSISVDRQIHKLQDWAGNKQ. Phosphotyrosine is present on Y352. Residue C356 is the site of S-palmitoyl cysteine attachment. Phosphoserine occurs at positions 365 and 371. T374 carries the phosphothreonine modification. A phosphoserine; by GRK6 mark is found at S378 and S380.

This sequence belongs to the G-protein coupled receptor 1 family. Bradykinin receptor subfamily. BDKRB2 sub-subfamily. As to quaternary structure, forms a complex with PECAM1 and GNAQ. Interacts with PECAM1. Diphosphorylation at Ser-365 and Ser-371, at Ser-378 and Ser-380, and at Thr-374 and Ser-380 seem to be correlated pairwise. In terms of processing, palmitoylation at Cys-356 and phosphorylation at Tyr-352 seem to be mutually exclusive. Uterus, vas deferens, kidney, ileum, heart, testis, lung and brain.

It localises to the cell membrane. Receptor for bradykinin. It is associated with G proteins that activate a phosphatidylinositol-calcium second messenger system. The chain is B2 bradykinin receptor (Bdkrb2) from Rattus norvegicus (Rat).